The following is a 644-amino-acid chain: Exoribonuclease 2 (644 aa).

Residues 189–516 (RQDLTALNFV…NHRLLKAVIK (328 aa)) form the RNB domain. The 83-residue stretch at 561 to 643 (NTRFAAEIID…ETRSIIARPA (83 aa)) folds into the S1 motif domain.

Belongs to the RNR ribonuclease family. RNase II subfamily.

It is found in the cytoplasm. The enzyme catalyses Exonucleolytic cleavage in the 3'- to 5'-direction to yield nucleoside 5'-phosphates.. Involved in mRNA degradation. Hydrolyzes single-stranded polyribonucleotides processively in the 3' to 5' direction. The polypeptide is Exoribonuclease 2 (Salmonella gallinarum (strain 287/91 / NCTC 13346)).